The following is a 507-amino-acid chain: Lysine--tRNA ligase (507 aa).

Mg(2+) contacts are provided by Glu416 and Glu423.

The protein belongs to the class-II aminoacyl-tRNA synthetase family. As to quaternary structure, homodimer. The cofactor is Mg(2+).

It localises to the cytoplasm. The catalysed reaction is tRNA(Lys) + L-lysine + ATP = L-lysyl-tRNA(Lys) + AMP + diphosphate. In Hahella chejuensis (strain KCTC 2396), this protein is Lysine--tRNA ligase.